Consider the following 317-residue polypeptide: DNA-directed RNA polymerase subunit alpha (317 aa).

The alpha N-terminal domain (alpha-NTD) stretch occupies residues 1–234 (MKQFVRPEFI…AHLEFFIDLN (234 aa)). The interval 249-317 (DDKELDRTVE…ASLGLAFRQS (69 aa)) is alpha C-terminal domain (alpha-CTD).

It belongs to the RNA polymerase alpha chain family. Homodimer. The RNAP catalytic core consists of 2 alpha, 1 beta, 1 beta' and 1 omega subunit. When a sigma factor is associated with the core the holoenzyme is formed, which can initiate transcription.

It catalyses the reaction RNA(n) + a ribonucleoside 5'-triphosphate = RNA(n+1) + diphosphate. Its function is as follows. DNA-dependent RNA polymerase catalyzes the transcription of DNA into RNA using the four ribonucleoside triphosphates as substrates. The polypeptide is DNA-directed RNA polymerase subunit alpha (Mycoplasma capricolum subsp. capricolum (strain California kid / ATCC 27343 / NCTC 10154)).